A 346-amino-acid chain; its full sequence is S-adenosylmethionine:tRNA ribosyltransferase-isomerase (346 aa).

Belongs to the QueA family. Monomer.

It localises to the cytoplasm. It catalyses the reaction 7-aminomethyl-7-carbaguanosine(34) in tRNA + S-adenosyl-L-methionine = epoxyqueuosine(34) in tRNA + adenine + L-methionine + 2 H(+). It functions in the pathway tRNA modification; tRNA-queuosine biosynthesis. Functionally, transfers and isomerizes the ribose moiety from AdoMet to the 7-aminomethyl group of 7-deazaguanine (preQ1-tRNA) to give epoxyqueuosine (oQ-tRNA). The chain is S-adenosylmethionine:tRNA ribosyltransferase-isomerase from Nitrosomonas eutropha (strain DSM 101675 / C91 / Nm57).